Here is a 173-residue protein sequence, read N- to C-terminus: Thaumatin-like protein PWIR2 (173 aa).

The N-terminal stretch at 1–20 is a signal peptide; the sequence is MATSPVLFLLLAVFAAGASA.

This sequence belongs to the thaumatin family.

This chain is Thaumatin-like protein PWIR2, found in Triticum aestivum (Wheat).